Here is a 423-residue protein sequence, read N- to C-terminus: Pre-mRNA-splicing regulator WTAP (423 aa).

The tract at residues 234–423 is disordered; sequence QQLSQMNQTQ…TSNASAGSVL (190 aa). 4 stretches are compositionally biased toward polar residues: residues 239–276, 285–301, 358–377, and 392–404; these read MNQT…SSNV, NGPS…SGSS, DSPT…TDSN, and TAGT…NGLD. Residues 405 to 423 are compositionally biased toward low complexity; that stretch reads SSAAAVATNTSNASAGSVL.

Belongs to the fl(2)d family. In terms of assembly, component of the WMM complex, a N6-methyltransferase complex composed of a catalytic subcomplex, named MAC, and of an associated subcomplex, named MACOM. Component of the MACOM subcomplex.

It is found in the nucleus speckle. The protein localises to the nucleus. The protein resides in the nucleoplasm. Its function is as follows. Associated component of the WMM complex, a complex that mediates N6-methyladenosine (m6A) methylation of RNAs, a modification that plays a role in the efficiency of mRNA splicing and RNA processing. This chain is Pre-mRNA-splicing regulator WTAP, found in Danio rerio (Zebrafish).